Here is an 86-residue protein sequence, read N- to C-terminus: RNA-binding protein Hfq (86 aa).

Residues 9 to 68 form the Sm domain; sequence DPYLNTLRKEKVGVSIYLVNGIKLQGTIESFDQFVILLKNTVSQMVYKHAISTVVPVRPI.

It belongs to the Hfq family. In terms of assembly, homohexamer.

RNA chaperone that binds small regulatory RNA (sRNAs) and mRNAs to facilitate mRNA translational regulation in response to envelope stress, environmental stress and changes in metabolite concentrations. Also binds with high specificity to tRNAs. In Pseudomonas fluorescens (strain ATCC BAA-477 / NRRL B-23932 / Pf-5), this protein is RNA-binding protein Hfq.